Reading from the N-terminus, the 7078-residue chain is MSFVAGVTAQGARGTYRAALNSEKHQDHVSLTVPLCGSGNLVEKLSPWFMDGENAYEVVKAMLLKKEPLLYVPIRLAGHTRHLPGPRVYLVERLIACENPFMVNQLAYSSSANGSLVGTTLQGKPIGMFFPYDIELVTGKQNILLRKYGRGGYHYTPFHYERDNTSCPEWMDDFEADPKGKYAQNLLKKLIGGDVTPVDQYMCGVDGKPISAYAFLMAKDGITKLADVEADVAARADDEGFITLKNNLYRLVWHVERKDVPYPKQSIFTINSVVQKDGVENTPPHYFTLGCKILTLTPRNKWSGVSDLSLKQKLLYTFYGKESLENPTYIYHSAFIECGSCGNDSWLTGNAIQGFACGCGASYTANDVEVQSSGMIKPNALLCATCPFAKGDSCSSNCKHSVAQLVSYLSERCNVIADSKSFTLIFGGVAYAYFGCEEGTMYFVPRAKSVVSRIGDSIFTGCTGSWNKVTQIANMFLEQTQHSLNFVGEFVVNDVVLAILSGTTTNVDKIRQLLKGVTLDKLRDYLADYDVAVTAGPFMDNAINVGGTGLQYAAITAPYVVLTGLGESFKKVATIPYKVCNSVKDTLTYYAHSVLYRVFPYDMDSGVSSFSELLFDCVDLSVASTYFLVRLLQDKTGDFMSTIITSCQTAVSKLLDTCFEATEATFNFLLDLAGLFRIFLRNAYVYTSQGFVVVNGKVSTLVKQVLDLLNKGMQLLHTKVSWAGSNISAVIYSGRESLIFPSGTYYCVTTKAKSVQQDLDVILPGEFSKKQLGLLQPTDNSTTVSVTVSSNMVETVVGQLEQTNMHSPDVIVGDYVIISEKLFVRSKEEDGFAFYPACTNGHAVPTLFRLKGGAPVKKVAFGGDQVHEVAAVRSVTVEYNIHAVLDTLLASSSLRTFVVDKSLSIEEFADVVKEQVSDLLVKLLRGMPIPDFDLDDFIDAPCYCFNAEGDASWSSTMIFSLHPVECDEECSEVEASDLEEGESECISETSTEQVDVSHEISDDEWAAAVDEAFPLDEAEDVTESVQEEAQPVEVPVEDIAQVVIADTLQETPVVSDTVEVPPQVVKLPSEPQTIQPEVKEVAPVYEADTEQTQSVTVKPKRLRKKRNVDPLSNFEHKVITECVTIVLGDAIQVAKCYGESVLVNAANTHLKHGGGIAGAINAASKGAVQKESDEYILAKGPLQVGDSVLLQGHSLAKNILHVVGPDARAKQDVSLLSKCYKAMNAYPLVVTPLVSAGIFGVKPAVSFDYLIREAKTRVLVVVNSQDVYKSLTIVDIPQSLTFSYDGLRGAIRKAKDYGFTVFVCTDNSANTKVLRNKGVDYTKKFLTVDGVQYYCYTSKDTLDDILQQANKSVGIISMPLGYVSHGLDLIQAGSVVRRVNVPYVCLLANKEQEAILMSEDVKLNPSEDFIKHVRTNGGYNSWHLVEGELLVQDLRLNKLLHWSDQTICYKDSVFYVVKNSTAFPFETLSACRAYLDSRTTQQLTIEVLVTVDGVNFRTVVLNNKNTYRSQLGCVFFNGADISDTIPDEKQNGHSLYLADNLTADETKALKELYGPVDPTFLHRFYSLKAAVHKWKMVVCDKVRSLKLSDNNCYLNAVIMTLDLLKDIKFVIPALQHAFMKHKGGDSTDFIALIMAYGNCTFGAPDDASRLLHTVLAKAELCCSARMVWREWCNVCGIKDVVLQGLKACCYVGVQTVEDLRARMTYVCQCGGERHRQIVEHTTPWLLLSGTPNEKLVTTSTAPDFVAFNVFQGIETAVGHYVHARLKGGLILKFDSGTVSKTSDWKCKVTDVLFPGQKYSSDCNVVRYSLDGNFRTEVDPDLSAFYVKDGKYFTSEPPVTYSPATILAGSVYTNSCLVSSDGQPGGDAISLSFNNLLGFDSSKPVTKKYTYSFLPKEDGDVLLAEFDTYDPIYKNGAMYKGKPILWVNKASYDTNLNKFNRASLRQIFDVAPIELENKFTPLSVESTPVEPPTVDVVALQQEMTIVKCKGLNKPFVKDNVSFVADDSGTPVVEYLSKEDLHTLYVDPKYQVIVLKDNVLSSMLRLHTVESGDINVVAASGSLTRKVKLLFRASFYFKEFATRTFTATTAVGSCIKSVVRHLGVTKGILTGCFSFVKMLFMLPLAYFSDSKLGTTEVKVSALKTAGVVTGNVVKQCCTAAVDLSMDKLRRVDWKSTLRLLLMLCTTMVLLSSVYHLYVFNQVLSSDVMFEDAQGLKKFYKEVRAYLGISSACDGLASAYRANSFDVPTFCANRSAMCNWCLISQDSITHYPALKMVQTHLSHYVLNIDWLWFAFETGLAYMLYTSAFNWLLLAGTLHYFFAQTSIFVDWRSYNYAVSSAFWLFTHIPMAGLVRMYNLLACLWLLRKFYQHVINGCKDTACLLCYKRNRLTRVEASTVVCGGKRTFYITANGGISFCRRHNWNCVDCDTAGVGNTFICEEVANDLTTALRRPINATDRSHYYVDSVTVKETVVQFNYRRDGQPFYERFPLCAFTNLDKLKFKEVCKTTTGIPEYNFIIYDSSDRGQESLARSACVYYSQVLCKSILLVDSSLVTSVGDSSEIATKMFDSFVNSFVSLYNVTRDKLEKLISTARDGVRRGDNFHSVLTTFIDAARGPAGVESDVETNEIVDSVQYAHKHDIQITNESYNNYVPSYVKPDSVSTSDLGSLIDCNAASVNQIVLRNSNGACIWNAAAYMKLSDALKRQIRIACRKCNLAFRLTTSKLRANDNILSVRFTANKIVGGAPTWFNALRDFTLKGYVLATIIVFLCAVLMYLCLPTFSMVPVEFYEDRILDFKVLDNGIIRDVNPDDKCFANKHRSFTQWYHEHVGGVYDNSITCPLTVAVIAGVAGARIPDVPTTLAWVNNQIIFFVSRVFANTGSVCYTPIDEIPYKSFSDSGCILPSECTMFRDAEGRMTPYCHDPTVLPGAFAYSQMRPHVRYDLYDGNMFIKFPEVVFESTLRITRTLSTQYCRFGSCEYAQEGVCITTNGSWAIFNDHHLNRPGVYCGSDFIDIVRRLAVSLFQPITYFQLTTSLVLGIGLCAFLTLLFYYINKVKRAFADYTQCAVIAVVAAVLNSLCICFVASIPLCIVPYTALYYYATFYFTNEPAFIMHVSWYIMFGPIVPIWMTCVYTVAMCFRHFFWVLAYFSKKHVEVFTDGKLNCSFQDAASNIFVINKDTYAALRNSLTNDAYSRFLGLFNKYKYFSGAMETAAYREAAACHLAKALQTYSETGSDLLYQPPNCSITSGVLQSGLVKMSHPSGDVEACMVQVTCGSMTLNGLWLDNTVWCPRHVMCPADQLSDPNYDALLISMTNHSFSVQKHIGAPANLRVVGHAMQGTLLKLTVDVANPSTPAYTFTTVKPGAAFSVLACYNGRPTGTFTVVMRPNYTIKGSFLCGSCGSVGYTKEGSVINFCYMHQMELANGTHTGSAFDGTMYGAFMDKQVHQVQLTDKYCSVNVVAWLYAAILNGCAWFVKPNRTSVVSFNEWALANQFTEFVGTQSVDMLAVKTGVAIEQLLYAIQQLYTGFQGKQILGSTMLEDEFTPEDVNMQIMGVVMQSGVRKVTYGTAHWLFATLVSTYVIILQATKFTLWNYLFETIPTQLFPLLFVTMAFVMLLVKHKHTFLTLFLLPVAICLTYANIVYEPTTPISSALIAVANWLAPTNAYMRTTHTDIGVYISMSLVLVIVVKRLYNPSLSNFALALCSGVMWLYTYSIGEASSPIAYLVFVTTLTSDYTITVFVTVNLAKVCTYAIFAYSPQLTLVFPEVKMILLLYTCLGFMCTCYFGVFSLLNLKLRAPMGVYDFKVSTQEFRFMTANNLTAPRNSWEAMALNFKLIGIGGTPCIKVAAMQSKLTDLKCTSVVLLSVLQQLHLEANSRAWAFCVKCHNDILAATDPSEAFEKFVSLFATLMTFSGNVDLDALASDIFDTPSVLQATLSEFSHLATFAELEAAQKAYQEAMDSGDTSPQVLKALQKAVNIAKNAYEKDKAVARKLERMADQAMTSMYKQARAEDKKAKIVSAMQTMLFGMIKKLDNDVLNGIISNARNGCIPLSVIPLCASNKLRVVIPDFTVWNQVVTYPSLNYAGALWDITVINNVDNEIVKSSDVVDSNENLTWPLVLECTRASTSAVKLQNNEIKPSGLKTMVVSAGQEQTNCNTSSLAYYEPVQGRKMLMALLSDNAYLKWARVEGKDGFVSVELQPPCKFLIAGPKGPEIRYLYFVKNLNNLHRGQVLGHIAATVRLQAGSNTEFASNSSVLSLVNFTVDPQKAYLDFVNAGGAPLTNCVKMLTPKTGTGIAISVKPESTADQETYGGASVCLYCRAHIEHPDVSGVCKYKGKFVQIPAQCVRDPVGFCLSNTPCNVCQYWIGYGCNCDSLRQAALPQSKDSNFLKRVRGSIVNARIEPCSSGLSTDVVFRAFDICNYKAKVAGIGKYYKTNTCRFVELDDQGHHLDSYFVVKRHTMENYELEKHCYDLLRDCDAVAPHDFFIFDVDKVKTPHIVRQRLTEYTMMDLVYALRHFDQNSEVLKAILVKYGCCDVTYFENKLWFDFVENPSVIGVYHKLGERVRQAILNTVKFCDHMVKAGLVGVLTLDNQDLNGKWYDFGDFVITQPGSGVAIVDSYYSYLMPVLSMTDCLAAETHRDCDFNKPLIEWPLTEYDFTDYKVQLFEKYFKYWDQTYHANCVNCTDDRCVLHCANFNVLFAMTMPKTCFGPIVRKIFVDGVPFVVSCGYHYKELGLVMNMDVSLHRHRLSLKELMMYAADPAMHIASSNAFLDLRTSCFSVAALTTGLTFQTVRPGNFNQDFYDFVVSKGFFKEGSSVTLKHFFFAQDGNAAITDYNYYSYNLPTMCDIKQMLFCMEVVNKYFEIYDGGCLNASEVVVNNLDKSAGHPFNKFGKARVYYESMSYQEQDELFAMTKRNVIPTMTQMNLKYAISAKNRARTVAGVSILSTMTNRQYHQKMLKSMAATRGATCVIGTTKFYGGWDFMLKTLYKDVDNPHLMGWDYPKCDRAMPNMCRIFASLILARKHGTCCTTRDRFYRLANECAQVLSEYVLCGGGYYVKPGGTSSGDATTAYANSVFNILQATTANVSALMGANGNKIVDKEVKDMQFDLYVNVYRSTSPDPKFVDKYYAFLNKHFSMMILSDDGVVCYNSDYAAKGYIAGIQNFKETLYYQNNVFMSEAKCWVETDLKKGPHEFCSQHTLYIKDGDDGYFLPYPDPSRILSAGCFVDDIVKTDGTLMVERFVSLAIDAYPLTKHEDIEYQNVFWVYLQYIEKLYKDLTGHMLDSYSVMLCGDNSAKFWEEAFYRDLYSSPTTLQAVGSCVVCHSQTSLRCGTCIRRPFLCCKCCYDHVIATPHKMVLSVSPYVCNAPGCGVSDVTKLYLGGMSYFCVDHRPVCSFPLCANGLVFGLYKNMCTGSPSIVEFNRLATCDWTESGDYTLANTTTEPLKLFAAETLRATEEASKQSYAIATIKEIVGERQLLLVWEAGKSKPPLNRNYVFTGYHITKNSKVQLGEYIFERIDYSDAVSYKSSTTYKLTVGDIFVLTSHSVATLTAPTIVNQERYVKITGLYPTITVPEEFASHVANFQKSGYSKYVTVQGPPGTGKSHFAIGLAIYYPTARVVYTACSHAAVDALCEKAFKYLNIAKCSRIIPAKARVECYDRFKVNETNSQYLFSTINALPETSADILVVDEVSMCTNYDLSIINARIKAKHIVYVGDPAQLPAPRTLLTRGTLEPENFNSVTRLMCNLGPDIFLSMCYRCPKEIVSTVSALVYNNKLLAKKELSGQCFKILYKGNVTHDASSAINRPQLTFVKNFITANPAWSKAVFISPYNSQNAVARSMLGLTTQTVDSSQGSEYQYVIFCQTADTAHANNINRFNVAITRAQKGILCVMTSQALFESLEFTELSFTNYKLQSQIVTGLFKDCSRETSGLSPAYAPTYVSVDDKYKTSDELCVNLNLPANVPYSRVISRMGFKLDATVPGYPKLFITREEAVRQVRSWIGFDVEGAHASRNACGTNVPLQLGFSTGVNFVVQPVGVVDTEWGNMLTGIAARPPPGEQFKHLVPLMHKGAAWPIVRRRIVQMLSDTLDKLSDYCTFVCWAHGFELTSASYFCKIGKEQKCCMCNRRAAAYSSPLQSYACWTHSCGYDYVYNPFFVDVQQWGYVGNLATNHDRYCSVHQGAHVASNDAIMTRCLAIHSCFIERVDWDIEYPYISHEKKLNSCCRIVERNVVRAALLAGSFDKVYDIGNPKGIPIVDDPVVDWHYFDAQPLTRKVQQLFYTEDMASRFADGLCLFWNCNVPKYPNNAIVCRFDTRVHSEFNLPGCDGGSLYVNKHAFHTPAYDVSAFRDLKPLPFFYYSTTPCEVHGNGSMIEDIDYVPLKSAVCITACNLGGAVCRKHATEYREYMEAYNLVSASGFRLWCYKTFDIYNLWSTFTKVQGLENIAFNFVKQGHFIGVEGELPVAVVNDKIFTKSGVNDICMFENKTTLPTNIAFELYAKRAVRSHPDFKLLHNLQADICYKFVLWDYERSNIYGTATIGVCKYTDIDVNSALNICFDIRDNGSLEKFMSTPNAIFISDRKIKKYPCMVGPDYAYFNGAIIRDSDVVKQPVKFYLYKKVNNEFIDPTECIYTQSRSCSDFLPLSDMEKDFLSFDSDVFIKKYGLENYAFEHVVYGDFSHTTLGGLHLLIGLYKKQQEGHIIMEEMLKGSSTIHNYFITETNTAAFKAVCSVIDLKLDDFVMILKSQDLGVVSKVVKVPIDLTMIEFMLWCKDGQVQTFYPRLQASADWKPGHAMPSLFKVQNVNLERCELANYKQSIPMPRGVHMNIAKYMQLCQYLNTCTLAVPANMRVIHFGAGSDKGIAPGTSVLRQWLPTDAIIIDNDLNEFVSDADITLFGDCVTVRVGQQVDLVISDMYDPTTKNVTGSNESKALFFTYLCNLINNNLALGGSVAIKITEHSWSVELYELMGKFAWWTVFCTNANASSSEGFLLGINYLGTIKENIDGGAMHANYIFWRNSTPMNLSTYSLFDLSKFQLKLKGTPVLQLKESQINELVISLLSQGKLLIRDNDTLSVSTDVLVNTYRKLR.

Residues 25 to 149 (HQDHVSLTVP…KQNILLRKYG (125 aa)) enclose the CoV Nsp1 globular domain. The 29-residue stretch at 165-193 (TSCPEWMDDFEADPKGKYAQNLLKKLIGG) folds into the BetaCoV Nsp1 C-terminal domain. In terms of domain architecture, CoV Nsp2 N-terminal spans 195–475 (VTPVDQYMCG…WNKVTQIANM (281 aa)). The Zn(2+) site is built by C338, C341, C357, C359, C383, C386, H400, and C436. The C4 stretch occupies residues 338–359 (CGSCGNDSWLTGNAIQGFACGC). A C2HC region spans residues 383–436 (CATCPFAKGDSCSSNCKHSVAQLVSYLSERCNVIADSKSFTLIFGGVAYAYFGC). Positions 481-715 (QHSLNFVGEF…LDLLNKGMQL (235 aa)) constitute a CoV Nsp2 middle domain. The region spanning 717-853 (HTKVSWAGSN…VPTLFRLKGG (137 aa)) is the CoV Nsp2 C-terminal domain. Residues 857-966 (KKVAFGGDQV…MIFSLHPVEC (110 aa)) enclose the Ubiquitin-like 1 domain. Macro domains follow at residues 1110 to 1276 (PLSN…IVDI) and 1278 to 1404 (QSLT…VKLN). The DPUP domain maps to 1404-1477 (NPSEDFIKHV…LSACRAYLDS (74 aa)). Residues 1482–1537 (QLTIEVLVTVDGVNFRTVVLNNKNTYRSQLGCVFFNGADISDTIPDEKQNGHSLYL) enclose the Ubiquitin-like 2 domain. One can recognise a Peptidase C16 domain in the interval 1552–1823 (LYGPVDPTFL…RTEVDPDLSA (272 aa)). C1592 acts as the For PL-PRO activity in catalysis. 4 residues coordinate Zn(2+): C1672, C1675, C1707, and C1709. The C4-type zinc-finger motif lies at 1672-1709 (CNVCGIKDVVLQGLKACCYVGVQTVEDLRARMTYVCQC). Active-site for PL-PRO activity residues include H1759 and D1774. The 118-residue stretch at 1837-1954 (PVTYSPATIL…QIFDVAPIEL (118 aa)) folds into the Nucleic acid-binding domain. Positions 1967-2088 (PVEPPTVDVV…ATRTFTATTA (122 aa)) constitute a G2M domain. Residues 2040–2363 (SMLRLHTVES…NLLACLWLLR (324 aa)) form an HD1 region. A run of 2 helical transmembrane segments spans residues 2105 to 2125 (GILTGCFSFVKMLFMLPLAYF) and 2177 to 2197 (LLLMLCTTMVLLSSVYHLYVF). The 3Ecto domain maps to 2214 to 2280 (KKFYKEVRAY…LKMVQTHLSH (67 aa)). Intrachain disulfides connect C2230–C2258 and C2248–C2255. Transmembrane regions (helical) follow at residues 2281–2301 (YVLNIDWLWFAFETGLAYMLY), 2305–2325 (FNWLLLAGTLHYFFAQTSIFV), and 2330–2350 (YNYAVSSAFWLFTHIPMAGLV). The Y1 stretch occupies residues 2364 to 2454 (KFYQHVINGC…ALRRPINATD (91 aa)). The 374-residue stretch at 2364-2737 (KFYQHVINGC…LSVRFTANKI (374 aa)) folds into the CoV Nsp3 Y domain. H2368, C2373, C2378, C2381, C2414, H2417, C2421, and C2424 together coordinate Zn(2+). The interval 2368–2381 (HVINGCKDTACLLC) is ZF1. Residues 2414 to 2424 (CRRHNWNCVDC) form a ZF2 region. Positions 2455–2553 (RSHYYVDSVT…LVDSSLVTSV (99 aa)) are Y2. The segment at 2455–2737 (RSHYYVDSVT…LSVRFTANKI (283 aa)) is coV-Y. The Y3 stretch occupies residues 2554 to 2636 (GDSSEIATKM…DSVQYAHKHD (83 aa)). Positions 2637–2737 (IQITNESYNN…LSVRFTANKI (101 aa)) are Y4. The next 5 helical transmembrane spans lie at 2757–2777 (VLATIIVFLCAVLMYLCLPTF), 3028–3048 (TTSLVLGIGLCAFLTLLFYYI), 3062–3082 (AVIAVVAAVLNSLCICFVASI), 3104–3124 (PAFIMHVSWYIMFGPIVPIWM), and 3125–3145 (TCVYTVAMCFRHFFWVLAYFS). The tract at residues 2761-3171 (IIVFLCAVLM…QDAASNIFVI (411 aa)) is HD2. The Nsp4C domain occupies 3151–3247 (VFTDGKLNCS…NCSITSGVLQ (97 aa)). In terms of domain architecture, Peptidase C30 spans 3248–3553 (SGLVKMSHPS…NMQIMGVVMQ (306 aa)). Residues H3288 and C3395 each act as for 3CL-PRO activity in the active site. The next 7 helical transmembrane spans lie at 3559-3579 (VTYGTAHWLFATLVSTYVIIL), 3593-3613 (TIPTQLFPLLFVTMAFVMLLV), 3618-3638 (TFLTLFLLPVAICLTYANIVY), 3664-3684 (TTHTDIGVYISMSLVLVIVVK), 3691-3711 (LSNFALALCSGVMWLYTYSIG), 3740-3760 (LAKVCTYAIFAYSPQLTLVFP), and 3765-3785 (ILLLYTCLGFMCTCYFGVFSL). The tract at residues 3571–3785 (LVSTYVIILQ…CTCYFGVFSL (215 aa)) is HD3. In terms of domain architecture, RdRp Nsp7 cofactor spans 3846–3928 (SKLTDLKCTS…DIFDTPSVLQ (83 aa)). A RdRp Nsp8 cofactor domain is found at 3929–4127 (ATLSEFSHLA…RASTSAVKLQ (199 aa)). The 110-residue stretch at 4128–4237 (NNEIKPSGLK…GHIAATVRLQ (110 aa)) folds into the Nsp9 ssRNA-binding domain. The region spanning 4238–4377 (AGSNTEFASN…DSLRQAALPQ (140 aa)) is the ExoN/MTase coactivator domain. The Zn(2+) site is built by C4311, C4314, H4320, C4327, C4354, C4357, C4365, and C4367. Zinc fingers lie at residues 4311–4327 (CLYCRAHIEHPDVSGVC) and 4354–4367 (CNVCQYWIGYGCNC). The NiRAN domain occupies 4383-4639 (FLKRVRGSIV…AAETHRDCDF (257 aa)). Mn(2+) contacts are provided by N4587 and D4596. Residues 4644 to 4742 (IEWPLTEYDF…MNMDVSLHRH (99 aa)) form the Nsp12 Interface domain. The Zn(2+) site is built by H4673, C4679, C4684, C4688, and C4865. The Nsp12 RNA-dependent RNA polymerase domain maps to 4743–5310 (RLSLKELMMY…DLYSSPTTLQ (568 aa)). The interval 4745–4959 (SLKELMMYAA…HQKMLKSMAA (215 aa)) is rdRp Fingers N-ter. Residues 4960-4998 (TRGATCVIGTTKFYGGWDFMLKTLYKDVDNPHLMGWDYP) are rdRp Palm N-ter. Positions 4990 to 5152 (PHLMGWDYPK…CYNSDYAAKG (163 aa)) constitute a RdRp catalytic domain. The rdRp Fingers C-ter stretch occupies residues 4999–5057 (KCDRAMPNMCRIFASLILARKHGTCCTTRDRFYRLANECAQVLSEYVLCGGGYYVKPGG). The Zn(2+) site is built by H5020, C5023, and C5024. Residues 5058–5193 (TSSGDATTAY…KKGPHEFCSQ (136 aa)) form a rdRp Palm C-ter region. Catalysis depends on residues S5137, D5138, and D5139. Positions 5194-5310 (HTLYIKDGDD…DLYSSPTTLQ (117 aa)) are rdRp Thumb. The region spanning 5311-5423 (AVGSCVVCHS…VEFNRLATCD (113 aa)) is the CV ZBD domain. C5315, C5318, C5326, C5329, C5336, C5339, H5343, H5349, C5360, C5365, C5382, and H5385 together coordinate Zn(2+). ATP is bound at residue 5592-5599 (GPPGTGKS). The 216-residue stretch at 5980-6195 (LFITREEAVR…RCLAIHSCFI (216 aa)) folds into the ExoN domain. Active-site residues include D5998, E6000, and E6099. Positions 6115, 6118, 6134, 6137, 6165, 6169, and 6172 each coordinate Zn(2+). Catalysis depends on residues H6176 and D6181. Position 6187 (C6187) interacts with Zn(2+). In terms of domain architecture, N7-MTase spans 6204-6432 (YPYISHEKKL…NLWSTFTKVQ (229 aa)). Residue 6239–6245 (DIGNPKG) coordinates S-adenosyl-L-methionine. The gpppA-binding stretch occupies residues 6318-6332 (CDGGSLYVNKHAFHT). Residues C6356, C6378, C6389, and H6392 each coordinate Zn(2+). The region spanning 6433 to 6493 (GLENIAFNFV…NIAFELYAKR (61 aa)) is the Nsp15 N-terminal oligomerization domain. Residues 6494–6616 (AVRSHPDFKL…LYKKVNNEFI (123 aa)) enclose the AV-Nsp11N/CoV-Nsp15M domain. The region spanning 6633 to 6772 (LPLSDMEKDF…KDGQVQTFYP (140 aa)) is the NendoU domain. Catalysis depends on residues H6663, H6678, K6718, K6821, D6905, K6945, and E6978. Positions 6777-7071 (SADWKPGHAM…TLSVSTDVLV (295 aa)) constitute a Nidovirus-type SAM-dependent 2'-O-MTase domain.

Belongs to the coronaviruses polyprotein 1ab family. As to quaternary structure, interacts with host PHB and PHB2. Interacts with papain-like protease nsp3 and non-structural protein 6. In terms of assembly, monomer. Homodimer. Only the homodimer shows catalytic activity. As to quaternary structure, interacts with nsp8 and nsp12 to form the replication-transcription complex (RTC): nsp12, nsp7, two subunits of nsp8, and up to two subunits of nsp13. Interacts with nsp7, nsp13 and nsp12 to form the replication-transcription complex (RTC): nsp12, nsp7, two subunits of nsp8, and up to two subunits of nsp13. In terms of assembly, interacts with nsp12. As to quaternary structure, interacts with proofreading exoribonuclease nsp14 and 2'-O-methyltransferase nsp16; these interactions enhance nsp14 and nsp16 enzymatic activities. Interacts with nsp7 and nsp8 to form the replication-transcription complex (RTC): nsp12, nsp7, two subunits of nsp8, and up to two subunits of nsp13. Interacts with nsp9. In terms of assembly, interacts with nsp8 to form the replication-transcription complex (RTC): nsp12, nsp7, two subunits of nsp8, and up to two subunits of nsp13. Mn(2+) is required as a cofactor. The cofactor is Mg(2+). Specific enzymatic cleavages in vivo by its own proteases yield mature proteins. 3CL-PRO and PL-PRO proteinases are autocatalytically processed.

The protein localises to the host membrane. Its subcellular location is the host cytoplasm. It localises to the host perinuclear region. The protein resides in the host endoplasmic reticulum-Golgi intermediate compartment. The enzyme catalyses RNA(n) + a ribonucleoside 5'-triphosphate = RNA(n+1) + diphosphate. It carries out the reaction ATP + H2O = ADP + phosphate + H(+). It catalyses the reaction Thiol-dependent hydrolysis of ester, thioester, amide, peptide and isopeptide bonds formed by the C-terminal Gly of ubiquitin (a 76-residue protein attached to proteins as an intracellular targeting signal).. The catalysed reaction is a 5'-end (N(7)-methyl 5'-triphosphoguanosine)-ribonucleoside in mRNA + S-adenosyl-L-methionine = a 5'-end (N(7)-methyl 5'-triphosphoguanosine)-(2'-O-methyl-ribonucleoside) in mRNA + S-adenosyl-L-homocysteine + H(+). The enzyme catalyses uridylyl-uridylyl-ribonucleotide-RNA = a 3'-end uridylyl-2',3'-cyclophospho-uridine-RNA + a 5'-end dephospho-ribonucleoside-RNA. It carries out the reaction a 5'-end diphospho-ribonucleoside in mRNA + GTP + H(+) = a 5'-end (5'-triphosphoguanosine)-ribonucleoside in mRNA + diphosphate. It catalyses the reaction a 5'-end (5'-triphosphoguanosine)-ribonucleoside in mRNA + S-adenosyl-L-methionine = a 5'-end (N(7)-methyl 5'-triphosphoguanosine)-ribonucleoside in mRNA + S-adenosyl-L-homocysteine. Its function is as follows. The replicase polyprotein of coronaviruses is a multifunctional protein: it contains the activities necessary for the transcription of negative stranded RNA, leader RNA, subgenomic mRNAs and progeny virion RNA as well as proteinases responsible for the cleavage of the polyprotein into functional products. Promotes the degradation of host mRNAs by inducing an endonucleolytic RNA cleavage in template mRNAs, and inhibits of host mRNA translation, a function that is separable from its RNA cleavage activity. By suppressing host gene expression, nsp1 facilitates efficient viral gene expression in infected cells and evasion from host immune response. Functionally, may play a role in the modulation of host cell survival signaling pathway by interacting with host PHB and PHB2. Indeed, these two proteins play a role in maintaining the functional integrity of the mitochondria and protecting cells from various stresses. In terms of biological role, responsible for the cleavages located at the N-terminus of the replicase polyprotein. In addition, PL-PRO possesses a deubiquitinating/deISGylating activity and processes both 'Lys-48'- and 'Lys-63'-linked polyubiquitin chains from cellular substrates. Participates, together with nsp4, in the assembly of virally induced cytoplasmic double-membrane vesicles necessary for viral replication. Antagonizes innate immune induction of type I interferon by blocking the phosphorylation, dimerization and subsequent nuclear translocation of host IRF3. Also prevents host NF-kappa-B. signaling. Its function is as follows. Participates in the assembly of virally-induced cytoplasmic double-membrane vesicles necessary for viral replication. Cleaves the C-terminus of replicase polyprotein at 11 sites. Recognizes substrates containing the core sequence [ILMVF]-Q-|-[SGACN]. May cleave human NLRP1 in lung epithelial cells, thereby activating the NLRP1 inflammasome pathway. Also able to bind an ADP-ribose-1''-phosphate (ADRP). Functionally, plays a role in the initial induction of autophagosomes from host endoplasmic reticulum. Later, limits the expansion of these phagosomes that are no longer able to deliver viral components to lysosomes. In terms of biological role, forms a hexadecamer with nsp8 (8 subunits of each) that may participate in viral replication by acting as a primase. Alternatively, may synthesize substantially longer products than oligonucleotide primers. Its function is as follows. Forms a hexadecamer with nsp7 (8 subunits of each) that may participate in viral replication by acting as a primase. Alternatively, may synthesize substantially longer products than oligonucleotide primers. Forms a primer, NSP9-pU, which is utilized by the polymerase for the initiation of RNA chains. Interacts with ribosome signal recognition particle RNA (SRP). Together with NSP8, suppress protein integration into the cell membrane, thereby disrupting host immune defenses. Functionally, plays a pivotal role in viral transcription by stimulating both nsp14 3'-5' exoribonuclease and nsp16 2'-O-methyltransferase activities. Therefore plays an essential role in viral mRNAs cap methylation. In terms of biological role, RNA-directed RNA polymerase that catalyzes the transcription of viral genomic and subgenomic RNAs. Acts in complex with nsp7 and nsp8 to transcribe both the minus and positive strands of genomic RNA. The kinase-like NiRAN domain of NSP12 attaches one or more nucleotides to the amino terminus of NSP9, forming a covalent RNA-protein intermediate that serves as transcription/replication primer. Subgenomic RNAs (sgRNAs) are formed by discontinuous transcription: The polymerase has the ability to pause at transcription-regulating sequences (TRS) and jump to the leader TRS, resulting in a major deletion. This creates a series of subgenomic RNAs that are replicated, transcribed and translated. In addition, Nsp12 is a subunit of the viral RNA capping enzyme that catalyzes the RNA guanylyltransferase reaction for genomic and sub-genomic RNAs. Subsequently, the NiRAN domain transfers RNA to GDP, and forms the core cap structure GpppA-RNA. Its function is as follows. Multi-functional protein with a zinc-binding domain in N-terminus displaying RNA and DNA duplex-unwinding activities with 5' to 3' polarity. Activity of helicase is dependent on magnesium. Plays a role in viral RNA synthesis through two distinct activities: an N7-guanine methyltransferase activity involved in the formation of the cap structure GpppA-RNA; a proofreading exoribonuclease for RNA replication that reduces the sensitivity of the virus to RNA mutagens. This activity acts on both ssRNA and dsRNA in a 3'-5' direction. Functionally, plays a role in viral transcription/replication and prevents the simultaneous activation of host cell dsRNA sensors, such as MDA5/IFIH1, OAS, and PKR. Acts by degrading the 5'-polyuridines generated during replication of the poly(A) region of viral genomic and subgenomic RNAs. Catalyzes a two-step reaction in which a 2'3'-cyclic phosphate (2'3'-cP) is first generated by 2'-O transesterification, which is then hydrolyzed to a 3'-phosphate (3'-P). If not degraded, poly(U) RNA would hybridize with poly(A) RNA tails and activate host dsRNA sensors. In terms of biological role, methyltransferase that mediates mRNA cap 2'-O-ribose methylation to the 5'-cap structure of viral mRNAs. N7-methyl guanosine cap is a prerequisite for binding of nsp16. Therefore plays an essential role in viral mRNAs cap methylation which is essential to evade immune system. This is Replicase polyprotein 1ab (rep) from Camelus dromedarius (Dromedary).